A 271-amino-acid polypeptide reads, in one-letter code: Chitinase 6 (271 aa).

Residues 1-20 (MARRLSLLAVVLAMVAAVSA) form the signal peptide. The Chitin-binding type-1 domain maps to 25–60 (AQSCGCASDQCCSKWGFCGTGSDYCGTGCQAGPCDV). Cystine bridges form between cysteine 28-cysteine 36, cysteine 30-cysteine 42, cysteine 35-cysteine 49, cysteine 88-cysteine 137, cysteine 150-cysteine 159, and cysteine 239-cysteine 271. Glutamate 132 functions as the Proton donor in the catalytic mechanism. Asparagine 268 carries an N-linked (GlcNAc...) asparagine glycan.

It belongs to the glycosyl hydrolase 19 family. Chitinase class IV subfamily. As to expression, expressed in roots, leaves, sheaths and meristems.

It catalyses the reaction Random endo-hydrolysis of N-acetyl-beta-D-glucosaminide (1-&gt;4)-beta-linkages in chitin and chitodextrins.. In terms of biological role, may function in reproductive organs during embryogenesis and seed maturation. The polypeptide is Chitinase 6 (Cht6) (Oryza sativa subsp. japonica (Rice)).